The chain runs to 160 residues: Baculoviral IAP repeat-containing protein 5.1 (160 aa).

One copy of the BIR repeat lies at 27–97; that stretch reads RLATFADWPF…KRSASCGFLS (71 aa). Residue T43 is modified to Phosphothreonine; by CDK1. Positions 66, 69, 86, and 93 each coordinate Zn(2+).

This sequence belongs to the IAP family. In terms of assembly, component of the CPC at least composed of survivin/birc5, incenp, cdca8/borealin and/or cdca9/dasra-A, and aurkb/aurora-B. Interacts directly with incenp (via N-terminus), and may weakly interact with aurkb (via N-terminus) to stabilize the complex. Interacts with GTP-bound ran in both the S and M phases of the cell cycle. Also found in a complex with ubiquitin-mediated signaling proteins including at least usp9x/xFAM, nploc4/npl4 and ufd1. Post-translationally, ubiquitination is required for centrosome-targeting.

The protein resides in the cytoplasm. It localises to the nucleus. Its subcellular location is the chromosome. The protein localises to the centromere. It is found in the cytoskeleton. The protein resides in the spindle. In terms of biological role, component of the chromosomal passenger complex (CPC), a complex that acts as a key regulator of mitosis. The CPC complex has essential functions at the centromere in ensuring correct chromosome alignment and segregation and is required for chromatin-induced microtubule stabilization and spindle assembly. Stimulates the mitotic kinase activity of aurkb/aurora-B in the CPC. Does not appear to exhibit anti-apoptotic activity. The sequence is that of Baculoviral IAP repeat-containing protein 5.1 (birc5.1) from Xenopus tropicalis (Western clawed frog).